Here is a 338-residue protein sequence, read N- to C-terminus: Anthranilate phosphoribosyltransferase (338 aa).

5-phospho-alpha-D-ribose 1-diphosphate is bound by residues G80, 83–84 (GD), T88, 90–93 (NIST), 108–116 (KHGNRSVSS), and S120. G80 is an anthranilate binding site. Position 92 (S92) interacts with Mg(2+). N111 is a binding site for anthranilate. R166 lines the anthranilate pocket. Residues D225 and E226 each contribute to the Mg(2+) site.

It belongs to the anthranilate phosphoribosyltransferase family. Homodimer. Requires Mg(2+) as cofactor.

It catalyses the reaction N-(5-phospho-beta-D-ribosyl)anthranilate + diphosphate = 5-phospho-alpha-D-ribose 1-diphosphate + anthranilate. It functions in the pathway amino-acid biosynthesis; L-tryptophan biosynthesis; L-tryptophan from chorismate: step 2/5. In terms of biological role, catalyzes the transfer of the phosphoribosyl group of 5-phosphorylribose-1-pyrophosphate (PRPP) to anthranilate to yield N-(5'-phosphoribosyl)-anthranilate (PRA). The polypeptide is Anthranilate phosphoribosyltransferase (Desulfatibacillum aliphaticivorans).